Consider the following 487-residue polypeptide: Probable cytochrome P450 516A1 (487 aa).

A helical transmembrane segment spans residues 1–21 (MIILLLSIIIFILYIVKIFKN). Residue cysteine 434 participates in heme binding.

Belongs to the cytochrome P450 family. Heme serves as cofactor.

The protein resides in the membrane. In Dictyostelium discoideum (Social amoeba), this protein is Probable cytochrome P450 516A1 (cyp516A1).